Reading from the N-terminus, the 382-residue chain is Mannitol-1-phosphate 5-dehydrogenase (382 aa).

An NAD(+)-binding site is contributed by 3-14; that stretch reads ALHFGAGNIGRG.

It belongs to the mannitol dehydrogenase family.

It catalyses the reaction D-mannitol 1-phosphate + NAD(+) = beta-D-fructose 6-phosphate + NADH + H(+). The chain is Mannitol-1-phosphate 5-dehydrogenase from Klebsiella pneumoniae (strain 342).